We begin with the raw amino-acid sequence, 201 residues long: Retinol-binding protein 4 (201 aa).

The first 18 residues, 1 to 18 (MEWVWALVLLAALGGGSA), serve as a signal peptide directing secretion. 3 disulfide bridges follow: C22/C178, C88/C192, and C138/C147. Residue Q116 participates in substrate binding. Position 139 is an omega-N-methylarginine (R139).

It belongs to the calycin superfamily. Lipocalin family. As to quaternary structure, interacts with TTR. Interaction with TTR prevents its loss by filtration through the kidney glomeruli. Interacts with STRA6. Detected in blood plasma (at protein level).

Its subcellular location is the secreted. Retinol-binding protein that mediates retinol transport in blood plasma. Delivers retinol from the liver stores to the peripheral tissues. Transfers the bound all-trans retinol to STRA6, that then facilitates retinol transport across the cell membrane. The sequence is that of Retinol-binding protein 4 (Rbp4) from Rattus norvegicus (Rat).